Here is a 122-residue protein sequence, read N- to C-terminus: Large ribosomal subunit protein uL14c (122 aa).

This sequence belongs to the universal ribosomal protein uL14 family. As to quaternary structure, part of the 50S ribosomal subunit.

The protein resides in the plastid. It localises to the chloroplast. In terms of biological role, binds to 23S rRNA. The protein is Large ribosomal subunit protein uL14c of Citrus sinensis (Sweet orange).